Consider the following 178-residue polypeptide: ATP synthase subunit b (178 aa).

Residues 19–39 (ITGIGFVILLFIAIKYIVPAF) form a helical membrane-spanning segment.

It belongs to the ATPase B chain family. As to quaternary structure, F-type ATPases have 2 components, F(1) - the catalytic core - and F(0) - the membrane proton channel. F(1) has five subunits: alpha(3), beta(3), gamma(1), delta(1), epsilon(1). F(0) has three main subunits: a(1), b(2) and c(10-14). The alpha and beta chains form an alternating ring which encloses part of the gamma chain. F(1) is attached to F(0) by a central stalk formed by the gamma and epsilon chains, while a peripheral stalk is formed by the delta and b chains.

Its subcellular location is the cell membrane. F(1)F(0) ATP synthase produces ATP from ADP in the presence of a proton or sodium gradient. F-type ATPases consist of two structural domains, F(1) containing the extramembraneous catalytic core and F(0) containing the membrane proton channel, linked together by a central stalk and a peripheral stalk. During catalysis, ATP synthesis in the catalytic domain of F(1) is coupled via a rotary mechanism of the central stalk subunits to proton translocation. Its function is as follows. Component of the F(0) channel, it forms part of the peripheral stalk, linking F(1) to F(0). The chain is ATP synthase subunit b from Kocuria rhizophila (strain ATCC 9341 / DSM 348 / NBRC 103217 / DC2201).